A 127-amino-acid polypeptide reads, in one-letter code: RxLR effector protein SFI3 (127 aa).

The signal sequence occupies residues 1 to 20 (MRFLLVAVVAMMALVSSSTA). The short motif at 40–62 (RSLRNTEERSIAAILAEAGEEDR) is the RxLR-dEER element. The WY-domain stretch occupies residues 72-107 (WYKAKLTPTQVKTVLGVSQAEMNNVAKQLQRLYLGY).

It belongs to the RxLR effector family. As to quaternary structure, forms an unusual trans-homodimer. Interacts with host UBK.

The protein resides in the secreted. The protein localises to the host nucleus. It localises to the host nucleolus. Its function is as follows. Effector that suppresses flg22-induced post-translational MAP kinase activation in potato and tomato, but not in Arabidopsis. The perception of highly conserved pathogen- or microbe-associated molecular patterns (PAMPs/MAMPs), such as flg22, triggers converging signaling pathways recruiting MAP kinase cascades and inducing transcriptional re-programming, yielding a generic antimicrobial response. Does not suppress programmed cell death triggered by the P.infestans elicitin infestin-1 (INF1), or by co-expression of tomato Cf4 with Cladosporium fulvum Avr4. Suppresses early pattern-triggered immunity (PTI) via interaction with the U-box-kinase protein UBK, a positive regulator of specific PTI pathways in both potato and Nicotiana benthamiana. The polypeptide is RxLR effector protein SFI3 (Phytophthora infestans (strain T30-4) (Potato late blight agent)).